The primary structure comprises 278 residues: S-formylglutathione hydrolase YeiG (278 aa).

Active-site charge relay system residues include Ser-145, Asp-223, and His-256.

Belongs to the esterase D family.

It carries out the reaction S-formylglutathione + H2O = formate + glutathione + H(+). In terms of biological role, serine hydrolase involved in the detoxification of formaldehyde. Hydrolyzes S-formylglutathione to glutathione and formate. The chain is S-formylglutathione hydrolase YeiG (yeiG) from Shigella flexneri serotype 5b (strain 8401).